We begin with the raw amino-acid sequence, 211 residues long: ATP-dependent Clp protease proteolytic subunit (211 aa).

The active-site Nucleophile is serine 114. The active site involves histidine 139.

The protein belongs to the peptidase S14 family. Fourteen ClpP subunits assemble into 2 heptameric rings which stack back to back to give a disk-like structure with a central cavity, resembling the structure of eukaryotic proteasomes.

The protein resides in the cytoplasm. The enzyme catalyses Hydrolysis of proteins to small peptides in the presence of ATP and magnesium. alpha-casein is the usual test substrate. In the absence of ATP, only oligopeptides shorter than five residues are hydrolyzed (such as succinyl-Leu-Tyr-|-NHMec, and Leu-Tyr-Leu-|-Tyr-Trp, in which cleavage of the -Tyr-|-Leu- and -Tyr-|-Trp bonds also occurs).. Its function is as follows. Cleaves peptides in various proteins in a process that requires ATP hydrolysis. Has a chymotrypsin-like activity. Plays a major role in the degradation of misfolded proteins. The polypeptide is ATP-dependent Clp protease proteolytic subunit (Pseudomonas fluorescens (strain ATCC BAA-477 / NRRL B-23932 / Pf-5)).